Reading from the N-terminus, the 316-residue chain is Glutathione synthetase (316 aa).

The region spanning 125-311 (KLFTAWFPEL…ITGMLMNAIE (187 aa)) is the ATP-grasp domain. Residue 151-207 (HQKHGDVIFKPLDGMGGASIFRLKKDDPNVGVIIETLTEHGNRFCMAQNFLPAIKEG) coordinates ATP. Residues E281 and N283 each contribute to the Mg(2+) site.

Belongs to the prokaryotic GSH synthase family. Mg(2+) serves as cofactor. The cofactor is Mn(2+).

It carries out the reaction gamma-L-glutamyl-L-cysteine + glycine + ATP = glutathione + ADP + phosphate + H(+). It functions in the pathway sulfur metabolism; glutathione biosynthesis; glutathione from L-cysteine and L-glutamate: step 2/2. The protein is Glutathione synthetase of Photorhabdus laumondii subsp. laumondii (strain DSM 15139 / CIP 105565 / TT01) (Photorhabdus luminescens subsp. laumondii).